A 189-amino-acid polypeptide reads, in one-letter code: Peptidyl-tRNA hydrolase (189 aa).

Tyr-15 is a binding site for tRNA. The active-site Proton acceptor is His-20. Residues Phe-66, Asn-68, and Asn-114 each coordinate tRNA.

The protein belongs to the PTH family. In terms of assembly, monomer.

The protein resides in the cytoplasm. The catalysed reaction is an N-acyl-L-alpha-aminoacyl-tRNA + H2O = an N-acyl-L-amino acid + a tRNA + H(+). Its function is as follows. Hydrolyzes ribosome-free peptidyl-tRNAs (with 1 or more amino acids incorporated), which drop off the ribosome during protein synthesis, or as a result of ribosome stalling. Catalyzes the release of premature peptidyl moieties from peptidyl-tRNA molecules trapped in stalled 50S ribosomal subunits, and thus maintains levels of free tRNAs and 50S ribosomes. The sequence is that of Peptidyl-tRNA hydrolase from Streptococcus pneumoniae serotype 2 (strain D39 / NCTC 7466).